We begin with the raw amino-acid sequence, 516 residues long: GMP synthase [glutamine-hydrolyzing] (516 aa).

Residues 7–199 (KIIILDFGSQ…VFGLCKCQAT (193 aa)) enclose the Glutamine amidotransferase type-1 domain. Cys-84 functions as the Nucleophile in the catalytic mechanism. Active-site residues include His-173 and Glu-175. Residues 200 to 391 (WTMQGFIESN…LGLPDEAVHR (192 aa)) enclose the GMPS ATP-PPase domain. Residue 227–233 (SGGVDSS) participates in ATP binding.

As to quaternary structure, homodimer.

The enzyme catalyses XMP + L-glutamine + ATP + H2O = GMP + L-glutamate + AMP + diphosphate + 2 H(+). It functions in the pathway purine metabolism; GMP biosynthesis; GMP from XMP (L-Gln route): step 1/1. Functionally, catalyzes the synthesis of GMP from XMP. This Desulfotalea psychrophila (strain LSv54 / DSM 12343) protein is GMP synthase [glutamine-hydrolyzing].